A 313-amino-acid chain; its full sequence is Glutathione synthetase (313 aa).

Positions 125-309 constitute an ATP-grasp domain; sequence KLFVMDFTEL…IAAKIWDVIE (185 aa). 151-207 contributes to the ATP binding site; the sequence is RAEHGAVVMKPLHGHGGAAVFRVLPQDINFGSLYDMFAVTFREPWVIQRFLPEVKHG. The Mg(2+) site is built by glutamate 280 and asparagine 282.

Belongs to the prokaryotic GSH synthase family. It depends on Mg(2+) as a cofactor. Mn(2+) is required as a cofactor.

It catalyses the reaction gamma-L-glutamyl-L-cysteine + glycine + ATP = glutathione + ADP + phosphate + H(+). Its pathway is sulfur metabolism; glutathione biosynthesis; glutathione from L-cysteine and L-glutamate: step 2/2. The sequence is that of Glutathione synthetase from Rhodopseudomonas palustris (strain ATCC BAA-98 / CGA009).